The sequence spans 366 residues: tRNA(Met) cytidine acetate ligase (366 aa).

ATP-binding positions include Ile-7–Leu-20, Gly-96, Asn-152, and Arg-175.

Belongs to the TmcAL family.

The protein localises to the cytoplasm. The catalysed reaction is cytidine(34) in elongator tRNA(Met) + acetate + ATP = N(4)-acetylcytidine(34) in elongator tRNA(Met) + AMP + diphosphate. In terms of biological role, catalyzes the formation of N(4)-acetylcytidine (ac(4)C) at the wobble position of elongator tRNA(Met), using acetate and ATP as substrates. First activates an acetate ion to form acetyladenylate (Ac-AMP) and then transfers the acetyl group to tRNA to form ac(4)C34. The chain is tRNA(Met) cytidine acetate ligase from Streptococcus equi subsp. zooepidemicus (strain MGCS10565).